A 193-amino-acid chain; its full sequence is Peptidyl-tRNA hydrolase (193 aa).

His-17 lines the tRNA pocket. His-22 functions as the Proton acceptor in the catalytic mechanism. Phe-68, Asn-70, and Asn-116 together coordinate tRNA.

This sequence belongs to the PTH family. In terms of assembly, monomer.

Its subcellular location is the cytoplasm. It carries out the reaction an N-acyl-L-alpha-aminoacyl-tRNA + H2O = an N-acyl-L-amino acid + a tRNA + H(+). Functionally, hydrolyzes ribosome-free peptidyl-tRNAs (with 1 or more amino acids incorporated), which drop off the ribosome during protein synthesis, or as a result of ribosome stalling. Its function is as follows. Catalyzes the release of premature peptidyl moieties from peptidyl-tRNA molecules trapped in stalled 50S ribosomal subunits, and thus maintains levels of free tRNAs and 50S ribosomes. This is Peptidyl-tRNA hydrolase from Xanthomonas campestris pv. campestris (strain 8004).